The chain runs to 316 residues: Small ribosomal subunit biogenesis GTPase RsgA (316 aa).

Positions 83-248 constitute a CP-type G domain; the sequence is DQYKSKLFAA…LIDSPGFQEF (166 aa). Residues 131–134 and 185–193 each bind GTP; these read NKTD and GQSGMGKST. Positions 272, 277, 279, and 285 each coordinate Zn(2+).

Belongs to the TRAFAC class YlqF/YawG GTPase family. RsgA subfamily. In terms of assembly, monomer. Associates with 30S ribosomal subunit, binds 16S rRNA. The cofactor is Zn(2+).

It is found in the cytoplasm. In terms of biological role, one of several proteins that assist in the late maturation steps of the functional core of the 30S ribosomal subunit. Helps release RbfA from mature subunits. May play a role in the assembly of ribosomal proteins into the subunit. Circularly permuted GTPase that catalyzes slow GTP hydrolysis, GTPase activity is stimulated by the 30S ribosomal subunit. The sequence is that of Small ribosomal subunit biogenesis GTPase RsgA from Paraburkholderia phytofirmans (strain DSM 17436 / LMG 22146 / PsJN) (Burkholderia phytofirmans).